An 859-amino-acid polypeptide reads, in one-letter code: Leucine--tRNA ligase (859 aa).

The 'HIGH' region motif lies at 42 to 52 (PYPSGKLHVGH). Positions 611–615 (KMSKS) match the 'KMSKS' region motif. K614 contacts ATP.

It belongs to the class-I aminoacyl-tRNA synthetase family.

It localises to the cytoplasm. The catalysed reaction is tRNA(Leu) + L-leucine + ATP = L-leucyl-tRNA(Leu) + AMP + diphosphate. The polypeptide is Leucine--tRNA ligase (Fusobacterium nucleatum subsp. nucleatum (strain ATCC 25586 / DSM 15643 / BCRC 10681 / CIP 101130 / JCM 8532 / KCTC 2640 / LMG 13131 / VPI 4355)).